Consider the following 60-residue polypeptide: Cytotoxin 1 (60 aa).

4 disulfides stabilise this stretch: C3–C21, C14–C38, C42–C53, and C54–C59.

The protein belongs to the three-finger toxin family. Short-chain subfamily. Type IA cytotoxin sub-subfamily. In terms of assembly, monomer in solution; Homodimer and oligomer in the presence of negatively charged lipids forming a pore with a size ranging between 20 and 30 angstroms. As to expression, expressed by the venom gland.

It is found in the secreted. The protein localises to the target cell membrane. Basic protein that binds to cell membrane and depolarizes cardiomyocytes. This cytotoxin also possesses lytic activity on many other cells, including red blood cells. Interaction with sulfatides in the cell membrane induces pore formation and cell internalization and is responsible for cytotoxicity in cardiomyocytes. It targets the mitochondrial membrane and induces mitochondrial swelling and fragmentation. Inhibits protein kinases C. It binds to the integrin alpha-V/beta-3 with a moderate affinity. In Naja pallida (Red spitting cobra), this protein is Cytotoxin 1.